A 382-amino-acid polypeptide reads, in one-letter code: Serine/arginine-rich splicing factor SR45a (382 aa).

Composition is skewed to low complexity over residues 30–45 (PMSYSRRSRYSPSLSP), 54–68 (VSRSLSRSPTRSVSS), 177–195 (PSYSPRRSVSCSRSRSRSY), and 202–219 (SYSPSYGRRGRSSSYSPF). Disordered regions lie at residues 30 to 76 (PMSY…PGNS) and 150 to 382 (KARR…SVSP). Basic and acidic residues predominate over residues 288–316 (RARDRSCSPYYRGRDRSYSPHYQGRDRSY). Positions 329 to 343 (VSGSVSPGGRSMSRS) are enriched in low complexity. Basic residues predominate over residues 345 to 361 (SPRKGRKESRSKSRRHD). A compositionally biased stretch (low complexity) spans 364 to 382 (SSMCHSRSARSSTSRSVSP).

Belongs to the splicing factor SR family. SR45 subfamily. In terms of assembly, component of the spliceosome. Homodimer. Interacts with PRP38, SCL28, SR45, RNU1 and U2AF35B. Post-translationally, phosphorylated. As to expression, expressed in leaves, stems and roots.

It is found in the nucleus speckle. Functionally, probable splicing factor involved in constitutive and/or alternative splicing events. May bridge the 5' and 3' components of the spliceosome. The protein is Serine/arginine-rich splicing factor SR45a (SR45A) of Arabidopsis thaliana (Mouse-ear cress).